Consider the following 200-residue polypeptide: NADH-quinone oxidoreductase subunit C (200 aa).

This sequence belongs to the complex I 30 kDa subunit family. NDH-1 is composed of 14 different subunits. Subunits NuoB, C, D, E, F, and G constitute the peripheral sector of the complex.

It is found in the cell inner membrane. It catalyses the reaction a quinone + NADH + 5 H(+)(in) = a quinol + NAD(+) + 4 H(+)(out). NDH-1 shuttles electrons from NADH, via FMN and iron-sulfur (Fe-S) centers, to quinones in the respiratory chain. The immediate electron acceptor for the enzyme in this species is believed to be ubiquinone. Couples the redox reaction to proton translocation (for every two electrons transferred, four hydrogen ions are translocated across the cytoplasmic membrane), and thus conserves the redox energy in a proton gradient. This Ralstonia pickettii (strain 12J) protein is NADH-quinone oxidoreductase subunit C.